Reading from the N-terminus, the 177-residue chain is ADP-ribosylation factor-like protein 3 (177 aa).

G2 is lipidated: N-myristoyl glycine. GTP is bound by residues 23 to 31, 125 to 128, and A159; these read GLDNAGKTT and NKQD.

This sequence belongs to the small GTPase superfamily. Arf family.

The protein localises to the golgi apparatus membrane. The protein resides in the cytoplasm. It localises to the cytoskeleton. Its subcellular location is the spindle. It is found in the nucleus. The protein localises to the microtubule organizing center. In terms of biological role, small GTP-binding protein which cycles between an inactive GDP-bound and an active GTP-bound form, and the rate of cycling is regulated by guanine nucleotide exchange factors (GEF) and GTPase-activating proteins (GAP). Required for normal cytokinesis and cilia signaling. Required for targeting proteins to the ciliary membrane by releasing myristoylated protein from unc119 cargo adapters into the cilium. This Chlamydomonas reinhardtii (Chlamydomonas smithii) protein is ADP-ribosylation factor-like protein 3.